The primary structure comprises 47 residues: LLCLQKYSPGRETSQTCLAGENICFKKWKKGEKTSRXGCAVTCPKXK.

Intrachain disulfides connect C3/C24 and C17/C39.

In terms of tissue distribution, expressed by the venom gland.

Its subcellular location is the secreted. The sequence is that of Short neurotoxin D2A from Micrurus pyrrhocryptus (Coral snake).